The following is a 158-amino-acid chain: Frataxin homolog, mitochondrial (158 aa).

It belongs to the frataxin family. In terms of assembly, monomer. Oligomer.

Its subcellular location is the mitochondrion. It carries out the reaction 4 Fe(2+) + O2 + 4 H(+) = 4 Fe(3+) + 2 H2O. Promotes the biosynthesis of heme as well as the assembly and repair of iron-sulfur clusters by delivering Fe(2+) to proteins involved in these pathways. May play a role in the protection against iron-catalyzed oxidative stress through its ability to catalyze the oxidation of Fe(2+) to Fe(3+). May be able to store large amounts of the metal in the form of a ferrihydrite mineral by oligomerization. This chain is Frataxin homolog, mitochondrial, found in Schizosaccharomyces pombe (strain 972 / ATCC 24843) (Fission yeast).